The following is a 529-amino-acid chain: MEPGLVGPGPYRATRLWNEIIELFRAGMPLRKHRCRFKSYERCFKASEAVDCLHELLGSNQNFGPEVTRSQTVKLLKKFLKNHVIEDIKGRWGKEDFQDDGHLYRFPPSSPLKPYPKKPSFGKEVIKFPDWDDPKAGTSQEHIPVKSIMMNSETWYKRHSIAIGEVPACKLVFRRELTQENIEEIWKSMTLARLQKVLGLDCLDEVIDTKLVNSKHIVQNAYNVNKQGIVTLEDKSKDLPHWILSAMKCLANWPICSDLKQPTYSGFERDVFKTIVDYFGQMKEPLLTFNFFDVFVSVLGLLQKHNEAIEALQISCLLLPPESRRKLQLLVRMMARISFNKDLPPLSESVRTRVLMVQAFSRCILCSKDEMDLDELLAAKLVSFLMDNYQEILSVPSSLKSSIEEHVVHVQRVQIKYAGADTDAAFPAPSFCHQISTDEFEYQRATGSQEPLAALLEEIATNKEISVKDKKKKLKQFQKSYPEVYRVRFPTPETEAVLFPEKSKQKPPLLMWALRKPFQPFHRTRSFRM.

A DEP domain is found at 24–108 (FRAGMPLRKH…DDGHLYRFPP (85 aa)). A Rho-GAP domain is found at 192–393 (ARLQKVLGLD…FLMDNYQEIL (202 aa)).

The sequence is that of DEP domain-containing protein 1B (DEPDC1B) from Gallus gallus (Chicken).